Reading from the N-terminus, the 196-residue chain is MLLLTLTMIIAAYLIGSISSAILVCRFSGLPDPRTTGSKNPGATNVLRISNKFTAATVLFLDILKGTIPVWGAYFLKIDSLYLGFIGVSACLGHMYPIFFNFKGGKAVATALGTLLPIGFTLGGLLILTWVLVVKLTKYSSLAAIVTVSIAPLYVYFLKPLYVYPTLMLSALILFRHRDNIKRLLKGTESKITHKI.

The next 5 helical transmembrane spans lie at 4 to 24 (LTLT…AILV), 56 to 76 (ATVL…AYFL), 80 to 100 (SLYL…PIFF), 114 to 134 (TLLP…VLVV), and 155 to 175 (VYFL…LILF).

It belongs to the PlsY family. In terms of assembly, probably interacts with PlsX.

The protein resides in the cell inner membrane. It catalyses the reaction an acyl phosphate + sn-glycerol 3-phosphate = a 1-acyl-sn-glycero-3-phosphate + phosphate. The protein operates within lipid metabolism; phospholipid metabolism. Catalyzes the transfer of an acyl group from acyl-phosphate (acyl-PO(4)) to glycerol-3-phosphate (G3P) to form lysophosphatidic acid (LPA). This enzyme utilizes acyl-phosphate as fatty acyl donor, but not acyl-CoA or acyl-ACP. The chain is Glycerol-3-phosphate acyltransferase from Colwellia psychrerythraea (strain 34H / ATCC BAA-681) (Vibrio psychroerythus).